An 857-amino-acid polypeptide reads, in one-letter code: Leucine--tRNA ligase (857 aa).

Residues 42–52 (PYPSGRLHMGH) carry the 'HIGH' region motif. Positions 617-621 (KMSKS) match the 'KMSKS' region motif. Lys620 lines the ATP pocket.

The protein belongs to the class-I aminoacyl-tRNA synthetase family.

The protein resides in the cytoplasm. It carries out the reaction tRNA(Leu) + L-leucine + ATP = L-leucyl-tRNA(Leu) + AMP + diphosphate. The polypeptide is Leucine--tRNA ligase (Vibrio vulnificus (strain CMCP6)).